A 399-amino-acid polypeptide reads, in one-letter code: (R)-2-hydroxy-4-methylpentanoate CoA-transferase (399 aa).

Asp171 serves as the catalytic Nucleophile.

The protein belongs to the CoA-transferase III family. As to quaternary structure, homodimer.

The catalysed reaction is 4-methylpentanoyl-CoA + (2R)-hydroxy-4-methylpentanoate = (R)-2-hydroxy-4-methylpentanoyl-CoA + 4-methylpentanoate. The protein operates within amino-acid degradation; L-leucine degradation. In terms of biological role, involved in the reductive branch of L-leucine fermentation. Catalyzes the transfer of the CoA moiety from 4-methylpentanoyl-CoA (isocaproyl-CoA) to (R)-2-hydroxy-4-methylpentanoate ((R)-2-hydroxyisocaproate), leading to the formation of (R)-2-hydroxy-4-methylpentanoyl-CoA. Other CoA thioesters, such as acetyl-CoA or butyryl-CoA, are not accepted as substrates. This is (R)-2-hydroxy-4-methylpentanoate CoA-transferase from Clostridioides difficile (Peptoclostridium difficile).